A 94-amino-acid chain; its full sequence is Small ribosomal subunit protein uS19c (94 aa).

It belongs to the universal ribosomal protein uS19 family.

The protein localises to the plastid. It localises to the chloroplast. Its function is as follows. Protein S19 forms a complex with S13 that binds strongly to the 16S ribosomal RNA. The sequence is that of Small ribosomal subunit protein uS19c from Cyanidioschyzon merolae (strain NIES-3377 / 10D) (Unicellular red alga).